A 353-amino-acid polypeptide reads, in one-letter code: Dimethylsulfoniopropionate lyase 2 (353 aa).

Catalysis depends on proton donor/acceptor residues Cys-125 and Cys-274. A disordered region spans residues 326–353; the sequence is DPNETDVSKGRPTKAEHRFGPEFEEMLQ. Positions 331–346 are enriched in basic and acidic residues; sequence DVSKGRPTKAEHRFGP.

The protein belongs to the aspartate/glutamate racemases family. ALMA1 subfamily. In terms of assembly, homotetramer.

It catalyses the reaction S,S-dimethyl-beta-propiothetin = acrylate + dimethyl sulfide + H(+). Its function is as follows. Mediates cleavage of dimethylsulfoniopropionate (DMSP) into dimethyl sulfide (DMS) and acrylate. DMS is the principal form by which sulfur is transported from oceans to the atmosphere and is a key component of the ocean sulfur cycle. The polypeptide is Dimethylsulfoniopropionate lyase 2 (Emiliania huxleyi (strain CCMP1516)).